The following is a 433-amino-acid chain: Tol-Pal system protein TolB (433 aa).

An N-terminal signal peptide occupies residues 1-26; sequence MSLMTKLGFRALVASCLIAAGGAAHA.

The protein belongs to the TolB family. In terms of assembly, the Tol-Pal system is composed of five core proteins: the inner membrane proteins TolA, TolQ and TolR, the periplasmic protein TolB and the outer membrane protein Pal. They form a network linking the inner and outer membranes and the peptidoglycan layer.

It localises to the periplasm. In terms of biological role, part of the Tol-Pal system, which plays a role in outer membrane invagination during cell division and is important for maintaining outer membrane integrity. The protein is Tol-Pal system protein TolB of Burkholderia pseudomallei (strain 1710b).